We begin with the raw amino-acid sequence, 408 residues long: S-adenosylmethionine:tRNA ribosyltransferase-isomerase (408 aa).

This sequence belongs to the QueA family. Monomer.

It is found in the cytoplasm. The enzyme catalyses 7-aminomethyl-7-carbaguanosine(34) in tRNA + S-adenosyl-L-methionine = epoxyqueuosine(34) in tRNA + adenine + L-methionine + 2 H(+). The protein operates within tRNA modification; tRNA-queuosine biosynthesis. Transfers and isomerizes the ribose moiety from AdoMet to the 7-aminomethyl group of 7-deazaguanine (preQ1-tRNA) to give epoxyqueuosine (oQ-tRNA). The protein is S-adenosylmethionine:tRNA ribosyltransferase-isomerase of Trichormus variabilis (strain ATCC 29413 / PCC 7937) (Anabaena variabilis).